A 510-amino-acid chain; its full sequence is Probable cytochrome P450 4d20 (510 aa).

A heme-binding site is contributed by Cys-455.

It belongs to the cytochrome P450 family. Requires heme as cofactor.

The protein localises to the endoplasmic reticulum membrane. Its subcellular location is the microsome membrane. Its function is as follows. May be involved in the metabolism of insect hormones and in the breakdown of synthetic insecticides. This is Probable cytochrome P450 4d20 (Cyp4d20) from Drosophila melanogaster (Fruit fly).